Consider the following 608-residue polypeptide: RAS guanyl-releasing protein 2 (608 aa).

The N-terminal Ras-GEF domain occupies threonine 4–threonine 126. Phosphoserine occurs at positions 116, 117, and 147. The Ras-GEF domain occupies glutamate 154–arginine 387. The tract at residues leucine 382–proline 405 is disordered. EF-hand domains lie at histidine 426–leucine 461 and alanine 463–valine 490. Residues aspartate 439, aspartate 441, aspartate 443, histidine 445, glutamate 450, aspartate 468, asparagine 470, aspartate 472, cysteine 474, and glutamate 479 each coordinate Ca(2+). The segment at valine 498–cysteine 548 adopts a Phorbol-ester/DAG-type zinc-finger fold. Phosphoserine occurs at positions 554 and 575. Positions valine 555 to valine 596 are disordered.

Belongs to the RASGRP family. As to quaternary structure, forms a signaling complex with RAP1 and BRAF. Interacts with F-actin. Interacts with RAP1. Expressed in striatal neurons (at protein level). Expressed in the hematopoietic system. Detected in olfactory structures and deep cortical layers of brain.

It is found in the cytoplasm. It localises to the cytosol. The protein localises to the cell membrane. Its subcellular location is the synapse. The protein resides in the synaptosome. It is found in the cell projection. It localises to the ruffle membrane. Its function is as follows. Functions as a calcium- and DAG-regulated nucleotide exchange factor specifically activating Rap through the exchange of bound GDP for GTP. May also activate other GTPases such as RRAS, RRAS2, NRAS, KRAS but not HRAS. Functions in aggregation of platelets and adhesion of T-lymphocytes and neutrophils probably through inside-out integrin activation. May function in the muscarinic acetylcholine receptor M1/CHRM1 signaling pathway. The polypeptide is RAS guanyl-releasing protein 2 (Rasgrp2) (Rattus norvegicus (Rat)).